A 266-amino-acid chain; its full sequence is Thymidylate synthase (266 aa).

Arginine 24 provides a ligand contact to dUMP. Residue histidine 54 coordinates (6R)-5,10-methylene-5,6,7,8-tetrahydrofolate. Residue 129–130 participates in dUMP binding; it reads RR. Cysteine 149 (nucleophile) is an active-site residue. Residues 169-172, asparagine 180, and 210-212 contribute to the dUMP site; these read RSAD and HIY. Aspartate 172 serves as a coordination point for (6R)-5,10-methylene-5,6,7,8-tetrahydrofolate. Alanine 265 provides a ligand contact to (6R)-5,10-methylene-5,6,7,8-tetrahydrofolate.

This sequence belongs to the thymidylate synthase family. Bacterial-type ThyA subfamily. As to quaternary structure, homodimer.

It is found in the cytoplasm. It catalyses the reaction dUMP + (6R)-5,10-methylene-5,6,7,8-tetrahydrofolate = 7,8-dihydrofolate + dTMP. Its pathway is pyrimidine metabolism; dTTP biosynthesis. Catalyzes the reductive methylation of 2'-deoxyuridine-5'-monophosphate (dUMP) to 2'-deoxythymidine-5'-monophosphate (dTMP) while utilizing 5,10-methylenetetrahydrofolate (mTHF) as the methyl donor and reductant in the reaction, yielding dihydrofolate (DHF) as a by-product. This enzymatic reaction provides an intracellular de novo source of dTMP, an essential precursor for DNA biosynthesis. In Mycolicibacterium smegmatis (strain ATCC 700084 / mc(2)155) (Mycobacterium smegmatis), this protein is Thymidylate synthase.